We begin with the raw amino-acid sequence, 884 residues long: DNA mismatch repair protein MutS (884 aa).

Residue 601-608 (GPNMSGKS) coordinates ATP. Residues 826-845 (ESQLSFFGGEQSSKKQDKPL) are disordered.

The protein belongs to the DNA mismatch repair MutS family.

This protein is involved in the repair of mismatches in DNA. It is possible that it carries out the mismatch recognition step. This protein has a weak ATPase activity. The polypeptide is DNA mismatch repair protein MutS (Bacillus cereus (strain ATCC 14579 / DSM 31 / CCUG 7414 / JCM 2152 / NBRC 15305 / NCIMB 9373 / NCTC 2599 / NRRL B-3711)).